Reading from the N-terminus, the 1066-residue chain is Allene oxide synthase-lipoxygenase protein (1066 aa).

The interval methionine 1–glycine 371 is allene oxide synthase. Tyrosine 353 provides a ligand contact to heme. The tract at residues glutamine 372–isoleucine 1066 is arachidonate 8-lipoxygenase. Residues alanine 374 to alanine 490 form the PLAT domain. Ca(2+)-binding residues include histidine 387, glycine 389, threonine 390, aspartate 391, asparagine 416, aspartate 417, glutamate 419, aspartate 452, and aspartate 454. The region spanning threonine 491–isoleucine 1066 is the Lipoxygenase domain. Positions 757, 762, 943, 947, and 1066 each coordinate Fe cation.

The protein in the C-terminal section; belongs to the lipoxygenase family. As to quaternary structure, dimer. The cofactor is Ca(2+). It depends on Fe cation as a cofactor. Requires heme as cofactor.

Its subcellular location is the cytoplasm. The protein localises to the membrane. The catalysed reaction is (5Z,8Z,11Z,14Z)-eicosatetraenoate + O2 = (8R)-hydroperoxy-(5Z,9E,11Z,14Z)-eicosatetraenoate. It catalyses the reaction (8R)-hydroperoxy-(5Z,9E,11Z,14Z)-eicosatetraenoate = 8,9-epoxy-(5Z,9E,11Z,14Z)-eicosatetraenoate + H2O. The enzyme catalyses (5Z,8Z,11Z,14Z,17Z)-eicosapentaenoate + O2 = (8R)-hydroperoxy-(5Z,9E,11Z,14Z,17Z)-eicosapentaenoate. It carries out the reaction (4Z,7Z,10Z,13Z,16Z,19Z)-docosahexaenoate + O2 = 10-hydroperoxy-(4Z,7Z,11E,13Z,16Z,19Z)-docosahexaenoate. The catalysed reaction is (8Z,11Z,14Z)-eicosatrienoate + O2 = (8R)-hydroperoxy-(9E,11Z,14Z)-eicosatrienoate. It catalyses the reaction (8Z,11Z,14Z)-eicosatrienoate + O2 = 10-hydroperoxy-(8Z,11Z,14Z)-eicosatrienoate. The enzyme catalyses (8Z,11Z,14Z)-eicosatrienoate + O2 = 11-hydroperoxy-(8Z,12E,14Z)-eicosatrienoate. It participates in lipid metabolism; arachidonate metabolism. Its pathway is lipid metabolism; fatty acid metabolism. With respect to regulation, lipoxygenase activity is stimulated by calcium, sodium, lithium and potassium ions. Calcium binding promotes interaction with membranes and thus facilitates access to substrates. In terms of biological role, bifunctional enzyme which is responsible for allene oxide biosynthesis via a two-step reaction; first the lipoxygenase reaction that converts polyunsaturated fatty acids such as arachidonate ((5Z,8Z,11Z,14Z)-eicosatetraenoate) into a (8R)-hydroperoxide intermediate ((8R)-hydroperoxy-(5Z,9E,11Z,14Z)-eicosatetraenoate) followed by the allene oxide synthase reaction that converts the hydroperoxide intermediate ((8R)-hydroperoxy-(5Z,9E,11Z,14Z)-eicosatetraenoate) into the allene oxide (8,9-epoxy-(5Z,9E,11Z,14Z)-eicosatetraenoate). Shows preference for C20 or C22 highly polyunsaturated fatty acids and no activity with C18 fatty acids in vitro. Fatty acid allene oxides are intermediates in the formation of cyclopentenones or hydrolytic products in marine systems, most notably the prostanoid-related clavulones. The chain is Allene oxide synthase-lipoxygenase protein from Plexaura homomalla (Black sea rod).